A 151-amino-acid polypeptide reads, in one-letter code: Probable transcriptional regulator syrB2 (151 aa).

A disordered region spans residues 1 to 61 (MADESNTGSI…PRRYSEQQRK (61 aa)). Residues 11–23 (AAAVAPNADVKAP) are compositionally biased toward low complexity. Positions 24–35 (AAKKKRSPRRQK) are enriched in basic residues.

It belongs to the SyrB family.

Its function is as follows. Seems to affect the transcription of cya3. May be negatively autoregulated. This chain is Probable transcriptional regulator syrB2 (syrB2), found in Rhizobium meliloti (strain 1021) (Ensifer meliloti).